Here is a 527-residue protein sequence, read N- to C-terminus: Protein TIC 56, chloroplastic (527 aa).

The N-terminal 48 residues, 1-48 (MSSMNFNPFQNWFEKPPNPVPSINFVSLADSFFPKSQSPNFASIGLPK), are a transit peptide targeting the chloroplast. Positions 43-67 (SIGLPKFSKKSPKPETAGTDEPGPY) are disordered. At Asn-350 the chain carries Deamidated asparagine. The span at 491–508 (RREEELREEDLKHYSGRT) shows a compositional bias: basic and acidic residues. Residues 491 to 527 (RREEELREEDLKHYSGRTDEDEEEEEEEDDDSNSKKD) are disordered. Positions 509 to 521 (DEDEEEEEEEDDD) are enriched in acidic residues.

As to quaternary structure, part of the Tic complex. Component of the 1-MD complex, composed of TIC20-I, TIC214, TIC100 and TIC56. Interacts with the translocating preproteins. Hydrolysis of ATP is essential for the formation of this complex. The 1-MD complex interacts with TIC21.

It is found in the plastid. Its subcellular location is the chloroplast inner membrane. Functionally, involved in protein precursor import into chloroplasts. May be part of an intermediate translocation complex acting as a protein-conducting channel at the inner envelope. The polypeptide is Protein TIC 56, chloroplastic (Arabidopsis thaliana (Mouse-ear cress)).